The following is a 553-amino-acid chain: Thioredoxin domain-containing protein 2 (553 aa).

Disordered stretches follow at residues 1–37 (MDVD…DANE) and 77–442 (TEES…EETM). Residues 99 to 143 (PKQDDSPKSSEETIQPKEGDIPKAPEETIQSKKEDLPKSSEKAIQ) are compositionally biased toward basic and acidic residues. 22 tandem repeats follow at residues 113-127 (QPKE…EETI), 128-142 (QSKK…EKAI), 143-157 (QPKE…AKPI), 158-172 (QPKL…VKPS), 173-187 (QPKE…EETI), 188-202 (QSKK…EEAI), 203-217 (QPKE…AKPI), 218-232 (QPKL…VKPS), 233-247 (QPKE…EETI), 248-262 (QPKE…AKPI), 263-277 (QPKL…VKPS), 278-292 (QPKE…EEAI), 293-307 (QPKE…EEAI), 308-322 (QPKE…EEAI), 323-337 (QPKE…EEAI), 338-352 (QPKE…EETI), 353-367 (QPKK…EEAI), 368-382 (QPKE…KQAI), 383-397 (QPKE…EEAI), 398-412 (PPKE…EETI), 413-427 (QPKE…EEAT), and 428-442 (PSKE…EETM). Residues 113 to 442 (QPKEGDIPKA…DILKPEEETM (330 aa)) are 22 X 15 AA approximate tandem repeat of Q-P-K-X-G-D-I-P-K-S-[PS]-E-[KE]-X-I. Basic and acidic residues predominate over residues 173 to 209 (QPKEGDIPKAPEETIQSKKEDLPKSSEEAIQPKEGDI). The segment covering 233-254 (QPKESDIPKSPEETIQPKEGDI) has biased composition (basic and acidic residues). Composition is skewed to basic and acidic residues over residues 278 to 376 (QPKE…DIPK) and 385 to 439 (KEGD…KPEE). The residue at position 362 (Ser362) is a Phosphoserine. Ser392 is modified (phosphoserine). One can recognise a Thioredoxin domain in the interval 429-553 (SKEGDILKPE…KLEAVIAELK (125 aa)). Cys480 and Cys483 form a disulfide bridge.

Testis-specific. Only expressed during spermiogenesis, prominently in round and elongating spermatids.

The protein resides in the cytoplasm. Functionally, probably plays a regulatory role in sperm development. May participate in regulation of fibrous sheath (FS) assembly by supporting the formation of disulfide bonds during sperm tail morphogenesis. May also be required to rectify incorrect disulfide pairing and generate suitable pairs between the FS constituents. Can reduce disulfide bonds in vitro in the presence of NADP and thioredoxin reductase. The polypeptide is Thioredoxin domain-containing protein 2 (TXNDC2) (Homo sapiens (Human)).